The chain runs to 438 residues: Alkylcitrate synthase tstJ (438 aa).

Active-site residues include His309 and Asp365.

It belongs to the citrate synthase family.

It catalyses the reaction (2E,10E)-dode-2,10-dicenoyl-CoA + oxaloacetate + H2O = (4E,11E)-2-hydroxytrideca-4,11-dien-1,2,3-tricarboxylate + CoA + H(+). The protein operates within secondary metabolite biosynthesis. Its function is as follows. Alkylcitrate synthase; part of the gene cluster that mediates the biosynthesis of the antihypercholesterolemic agents phomoidrides which are dimeric anhydrides. Within the pathway, the alkylcitrate synthase (ACS) tstJ and the alkylcitrate dehydratase (ACDH) tstI produce the decarboxylated monomeric anhydrides by coupling the C12-fatty acyl product from phiA with oxalacetic acid. The pathway begins with the highly reducing polyketide synthase tstA that catalyzes the formation of a C12-fatty acyl-ACP, starting from one acetate and 5 malonate units. The hydrolase tstM is involved in the release of the C12-fatty acyl chain from phiA. The alkylcitrate synthase (ACS) tstJ and the alkylcitrate dehydratase (ACDH) tstI then give rise to decarboxylated monomeric anhydrides by coupling the C12-fatty acyl chain with oxalacetic acid. The cyclase tstC is responsible for the dimerization of the monomeric anhydrides which leads to the production of prephomoidride that contains the characteristic bicyclo[4.3.1]deca-1,6-diene system of phomoidrides. Iterative oxidation catalyzed by the alpha-ketoglutarate-dependent dioxygenase tstK produced then phomoidride A. Finally, the methyltransferase tstE converts phomoidride A to phomoidride B via an acetalization reaction. The phosphatidylethanolamine-binding protein tstB and tstN are not essential for dimerization and their functions have still to be determined. The protein is Alkylcitrate synthase tstJ of Talaromyces stipitatus (strain ATCC 10500 / CBS 375.48 / QM 6759 / NRRL 1006) (Penicillium stipitatum).